The sequence spans 317 residues: DNA-directed RNA polymerase subunit alpha (317 aa).

Residues 1-234 (MKQFVRPEFI…AHLEFFIDLN (234 aa)) are alpha N-terminal domain (alpha-NTD). Positions 250 to 317 (DKELDRTVEE…ASLGLAFRQS (68 aa)) are alpha C-terminal domain (alpha-CTD).

This sequence belongs to the RNA polymerase alpha chain family. As to quaternary structure, homodimer. The RNAP catalytic core consists of 2 alpha, 1 beta, 1 beta' and 1 omega subunit. When a sigma factor is associated with the core the holoenzyme is formed, which can initiate transcription.

The enzyme catalyses RNA(n) + a ribonucleoside 5'-triphosphate = RNA(n+1) + diphosphate. Functionally, DNA-dependent RNA polymerase catalyzes the transcription of DNA into RNA using the four ribonucleoside triphosphates as substrates. The sequence is that of DNA-directed RNA polymerase subunit alpha from Mycoplasma mycoides subsp. mycoides SC (strain CCUG 32753 / NCTC 10114 / PG1).